A 294-amino-acid polypeptide reads, in one-letter code: Probable HTH-type transcriptional regulator LrrA (294 aa).

The region spanning 1 to 58 is the HTH lysR-type domain; it reads MNITQLQILAAVVETGNFSAAALQLDLSQSAVSRAIAALEDELGVVLLSRGRFGARPT. Residues 18 to 37 constitute a DNA-binding region (H-T-H motif); the sequence is FSAAALQLDLSQSAVSRAIA.

Belongs to the LysR transcriptional regulatory family.

This Synechococcus elongatus (strain ATCC 33912 / PCC 7942 / FACHB-805) (Anacystis nidulans R2) protein is Probable HTH-type transcriptional regulator LrrA (lrrA).